A 216-amino-acid chain; its full sequence is UPF0502 protein Pfl01_3711 (216 aa).

Belongs to the UPF0502 family.

The protein is UPF0502 protein Pfl01_3711 of Pseudomonas fluorescens (strain Pf0-1).